Here is a 507-residue protein sequence, read N- to C-terminus: Dolichyl pyrophosphate Man9GlcNAc2 alpha-1,3-glucosyltransferase (507 aa).

The Cytoplasmic portion of the chain corresponds to Met-1 to Lys-3. Residues Trp-4–Asn-24 form a helical membrane-spanning segment. Over Ser-25–Thr-114 the chain is Lumenal. A glycan (N-linked (GlcNAc...) asparagine) is linked at Asn-59. A helical transmembrane segment spans residues Thr-115–Leu-135. Residues Lys-136–Lys-143 lie on the Cytoplasmic side of the membrane. The chain crosses the membrane as a helical span at residues Ile-144–Phe-164. The Lumenal portion of the chain corresponds to Gln-165 to Gly-172. Residues Phe-173–Phe-193 form a helical membrane-spanning segment. Over Cys-194–Lys-226 the chain is Cytoplasmic. Residues Gly-227 to Leu-247 traverse the membrane as a helical segment. Residues Pro-248 to Gln-297 lie on the Lumenal side of the membrane. A helical membrane pass occupies residues Leu-298 to Leu-318. Over Gln-319–Lys-323 the chain is Cytoplasmic. The chain crosses the membrane as a helical span at residues Gly-324–His-344. Residues Glu-345–Glu-361 lie on the Lumenal side of the membrane. The chain crosses the membrane as a helical span at residues Ile-362–Leu-382. The Cytoplasmic segment spans residues Lys-383 to Leu-387. A helical transmembrane segment spans residues Met-388 to Phe-408. Residues Glu-409–Arg-437 lie on the Lumenal side of the membrane. The helical transmembrane segment at Ile-438–Val-458 threads the bilayer. At Thr-459–Leu-473 the chain is on the cytoplasmic side. A helical membrane pass occupies residues Val-474 to Val-494. Residues Trp-495–Ser-507 lie on the Lumenal side of the membrane.

This sequence belongs to the ALG6/ALG8 glucosyltransferase family.

It localises to the endoplasmic reticulum membrane. The catalysed reaction is an alpha-D-Man-(1-&gt;2)-alpha-D-Man-(1-&gt;2)-alpha-D-Man-(1-&gt;3)-[alpha-D-Man-(1-&gt;2)-alpha-D-Man-(1-&gt;3)-[alpha-D-Man-(1-&gt;2)-alpha-D-Man-(1-&gt;6)]-alpha-D-Man-(1-&gt;6)]-beta-D-Man-(1-&gt;4)-beta-D-GlcNAc-(1-&gt;4)-alpha-D-GlcNAc-diphospho-di-trans,poly-cis-dolichol + a di-trans,poly-cis-dolichyl beta-D-glucosyl phosphate = an alpha-D-Glc-(1-&gt;3)-alpha-D-Man-(1-&gt;2)-alpha-D-Man-(1-&gt;2)-alpha-D-Man-(1-&gt;3)-[alpha-D-Man-(1-&gt;2)-alpha-D-Man-(1-&gt;3)-[alpha-D-Man-(1-&gt;2)-alpha-D-Man-(1-&gt;6)]-alpha-D-Man-(1-&gt;6)]-beta-D-Man-(1-&gt;4)-beta-D-GlcNAc-(1-&gt;4)-alpha-D-GlcNAc-diphospho-di-trans,poly-cis-dolichol + a di-trans,poly-cis-dolichyl phosphate + H(+). Its pathway is protein modification; protein glycosylation. In terms of biological role, dolichyl pyrophosphate Man9GlcNAc2 alpha-1,3-glucosyltransferase that operates in the biosynthetic pathway of dolichol-linked oligosaccharides, the glycan precursors employed in protein asparagine (N)-glycosylation. The assembly of dolichol-linked oligosaccharides begins on the cytosolic side of the endoplasmic reticulum membrane and finishes in its lumen. The sequential addition of sugars to dolichol pyrophosphate produces dolichol-linked oligosaccharides containing fourteen sugars, including two GlcNAcs, nine mannoses and three glucoses. Once assembled, the oligosaccharide is transferred from the lipid to nascent proteins by oligosaccharyltransferases. In the lumen of the endoplasmic reticulum, adds the first glucose residue from dolichyl phosphate glucose (Dol-P-Glc) onto the lipid-linked oligosaccharide intermediate Man(9)GlcNAc(2)-PP-Dol to produce Glc(1)Man(9)GlcNAc(2)-PP-Dol. Glc(1)Man(9)GlcNAc(2)-PP-Dol is a substrate for ALG8, the following enzyme in the biosynthetic pathway. The chain is Dolichyl pyrophosphate Man9GlcNAc2 alpha-1,3-glucosyltransferase from Pongo abelii (Sumatran orangutan).